Here is a 360-residue protein sequence, read N- to C-terminus: Peptide chain release factor 1 (360 aa).

At Gln236 the chain carries N5-methylglutamine.

Belongs to the prokaryotic/mitochondrial release factor family. Methylated by PrmC. Methylation increases the termination efficiency of RF1.

Its subcellular location is the cytoplasm. In terms of biological role, peptide chain release factor 1 directs the termination of translation in response to the peptide chain termination codons UAG and UAA. This Methylococcus capsulatus (strain ATCC 33009 / NCIMB 11132 / Bath) protein is Peptide chain release factor 1.